A 166-amino-acid chain; its full sequence is MIALESSQLQLIDKVVHISRVAKVVKGGRRFSFSAIVVVGDGNGRVGFSLGKANEVPEAIRKGMESAKRTMFEVPLVNATIPHEVLGRFGAASVVLKPASAGTGVIAGGAVRAIMEAAGIHNILTKCIGSRNPHNVVKATLEGLRRLRNVELVAKLRGREVHEIRD.

One can recognise an S5 DRBM domain in the interval L11 to V74.

The protein belongs to the universal ribosomal protein uS5 family. Part of the 30S ribosomal subunit. Contacts proteins S4 and S8.

Its function is as follows. With S4 and S12 plays an important role in translational accuracy. Functionally, located at the back of the 30S subunit body where it stabilizes the conformation of the head with respect to the body. The sequence is that of Small ribosomal subunit protein uS5 from Syntrophobacter fumaroxidans (strain DSM 10017 / MPOB).